The following is a 202-amino-acid chain: Small ribosomal subunit protein uS4 (202 aa).

The region spanning 94–157 is the S4 RNA-binding domain; it reads SRLDSLVYRA…LEMPLIKNTL (64 aa).

Belongs to the universal ribosomal protein uS4 family. In terms of assembly, part of the 30S ribosomal subunit. Contacts protein S5. The interaction surface between S4 and S5 is involved in control of translational fidelity.

Its function is as follows. One of the primary rRNA binding proteins, it binds directly to 16S rRNA where it nucleates assembly of the body of the 30S subunit. With S5 and S12 plays an important role in translational accuracy. The polypeptide is Small ribosomal subunit protein uS4 (Ureaplasma urealyticum serovar 10 (strain ATCC 33699 / Western)).